The primary structure comprises 82 residues: MSKGHSLQDPYLNTLRKERVPVSIYLVNGIKLQGQIESFDQFVILLKNTVSQMVYKHAISTVVPSRPVRLPSGDQPAEPGNA.

Positions 9–68 constitute a Sm domain; it reads DPYLNTLRKERVPVSIYLVNGIKLQGQIESFDQFVILLKNTVSQMVYKHAISTVVPSRPV.

It belongs to the Hfq family. In terms of assembly, homohexamer.

RNA chaperone that binds small regulatory RNA (sRNAs) and mRNAs to facilitate mRNA translational regulation in response to envelope stress, environmental stress and changes in metabolite concentrations. Also binds with high specificity to tRNAs. The chain is RNA-binding protein Hfq from Pseudomonas aeruginosa (strain LESB58).